The primary structure comprises 386 residues: Ovalbumin (386 aa).

Glycine 2 is subject to N-acetylglycine. The segment at residues 22 to 48 is a signal peptide (not cleaved); that stretch reads HHANENIFYCPIAIMSALAMVYLGAKD. Serine 69 is subject to Phosphoserine. An intrachain disulfide couples cysteine 74 to cysteine 121. Glutamate 192 lines the Ca(2+) pocket. N-linked (GlcNAc...) asparagine glycosylation occurs at asparagine 293. Serine 345 is subject to Phosphoserine.

The protein belongs to the serpin family. Ov-serpin subfamily. Homodimer. In terms of processing, undergoes proteolytic cleavage first at the canonical P1-P1' site, and then at the P8-P7 site by subtilisin. As to expression, major protein of egg white. Expressed in the magnum of the oviduct (at protein level).

It is found in the secreted. Functionally, non-inhibitory serpin. Storage protein of egg white. This is Ovalbumin (SERPINB14) from Gallus gallus (Chicken).